The following is a 450-amino-acid chain: Bifunctional apoptosis regulator (450 aa).

Basic and acidic residues predominate over residues 1–20 (MEEPQKNDLSMREQEEEHPV). Positions 1 to 25 (MEEPQKNDLSMREQEEEHPVRSSGP) are disordered. The Cytoplasmic portion of the chain corresponds to 1–140 (MEEPQKNDLS…PSTGRVNPQR (140 aa)). An RING-type zinc finger spans residues 34 to 74 (CHCCYDTLVNPTTLNCGHSFCRHCLALWWMSSKKTECPECR). Residues 141 to 161 (GGGFFSGVLTALTGVAVILLV) traverse the membrane as a helical segment. Over 162–331 (YHWRSRESEH…REPTWKQWRE (170 aa)) the chain is Extracellular. One can recognise an SAM domain in the interval 182-249 (WTMEEVVLWL…LTELERVRAL (68 aa)). N-linked (GlcNAc...) asparagine glycans are attached at residues N232 and N308. Residues 332 to 352 (FLVKYSFLPYQLIAEFAWDWL) traverse the membrane as a helical segment. Residues 353 to 360 (EVHYWTSR) lie on the Cytoplasmic side of the membrane. The helical transmembrane segment at 361 to 381 (FLIVNAVLLSVLELFSFWRIW) threads the bilayer. Residues 382-404 (SRSELKTVPQRMWSHFWKVSTQG) lie on the Extracellular side of the membrane. A helical membrane pass occupies residues 405–425 (LFMAMFWPLIPQFVCNCLFYW). Topologically, residues 426-450 (ALYFNPIINIDLVVKEVRRLETQVL) are cytoplasmic.

In terms of assembly, interacts with CASP8, BCL2 and BCL2L1 through SAM domain and also with HIP1, IFT57, ESRRBL1 and BCAP31. Interacts with NGFR; this interaction inhibits NF-kappa-B and JNK-related signaling pathways. Mediates RING-dependent self-ubiquitination leading to proteasomal degradation.

The protein resides in the endoplasmic reticulum membrane. The enzyme catalyses S-ubiquitinyl-[E2 ubiquitin-conjugating enzyme]-L-cysteine + [acceptor protein]-L-lysine = [E2 ubiquitin-conjugating enzyme]-L-cysteine + N(6)-ubiquitinyl-[acceptor protein]-L-lysine.. In terms of biological role, membrane-bound E3 ubiquitin ligase that plays a role in several processes including apoptosis regulation or reticulum endoplasmic stress. Has anti-apoptotic activity, both for apoptosis triggered via death-receptors and via mitochondrial factors. Contributes to the dynamic control of IRE1/ERN1 signaling during ER stress by inducing BAX inhibitor 1/TMBIM6 proteasomal degradation. Promotes the activation of TGF-beta signaling by mediating the 'Lys-63'-linked ubiquitination of TGFBR1 which is critical to activate the pathway. Together with NGFR, negatively regulates NF-kappa-B and JNK-related signaling pathways. Promotes the proteasome-mediated degradation of PNPLA3, a protein involveld in lipid metabolism. This chain is Bifunctional apoptosis regulator (Bfar), found in Mus musculus (Mouse).